We begin with the raw amino-acid sequence, 298 residues long: Ribosomal protein L11 methyltransferase (298 aa).

S-adenosyl-L-methionine is bound by residues threonine 152, glycine 173, aspartate 195, and asparagine 234.

It belongs to the methyltransferase superfamily. PrmA family.

Its subcellular location is the cytoplasm. The enzyme catalyses L-lysyl-[protein] + 3 S-adenosyl-L-methionine = N(6),N(6),N(6)-trimethyl-L-lysyl-[protein] + 3 S-adenosyl-L-homocysteine + 3 H(+). Methylates ribosomal protein L11. This is Ribosomal protein L11 methyltransferase from Ralstonia pickettii (strain 12J).